Consider the following 926-residue polypeptide: Eukaryotic translation initiation factor 3 subunit C (926 aa).

Disordered regions lie at residues 1–27 (MSRF…PKAA), 157–251 (ASYK…NDGT), and 266–300 (EKAS…EEGG). Residues 200–210 (KPQEEEKKAPE) show a composition bias toward basic and acidic residues. Residues 220-235 (DEESESDDDEDSEDWA) are compositionally biased toward acidic residues. Residues 274–283 (DDRRRRHKKK) show a composition bias toward basic residues. Positions 287–299 (EEEAEEEGEAEEG) are enriched in acidic residues. One can recognise a PCI domain in the interval 672-848 (FHMHINLELL…QTVVMHRTEP (177 aa)). Positions 890–919 (GGYQQKQGYQRGDQKGGYQQKQNYQRGGYR) are enriched in low complexity. The interval 890-926 (GGYQQKQGYQRGDQKGGYQQKQNYQRGGYRNQNQSSY) is disordered.

It belongs to the eIF-3 subunit C family. As to quaternary structure, component of the eukaryotic translation initiation factor 3 (eIF-3) complex, which is composed of 13 subunits: eif3a, eif3b, eif3c, eif3d, eif3e, eif3f, eif3g, eif3h, eif3i, eif3j, eif3k, eif3l and eif3m.

The protein resides in the cytoplasm. Functionally, component of the eukaryotic translation initiation factor 3 (eIF-3) complex, which is involved in protein synthesis of a specialized repertoire of mRNAs and, together with other initiation factors, stimulates binding of mRNA and methionyl-tRNAi to the 40S ribosome. The eIF-3 complex specifically targets and initiates translation of a subset of mRNAs involved in cell proliferation. The sequence is that of Eukaryotic translation initiation factor 3 subunit C (eif3c) from Danio rerio (Zebrafish).